A 219-amino-acid polypeptide reads, in one-letter code: Endonuclease V (219 aa).

Mg(2+) is bound by residues aspartate 41 and aspartate 107.

It belongs to the endonuclease V family. It depends on Mg(2+) as a cofactor.

The protein localises to the cytoplasm. It carries out the reaction Endonucleolytic cleavage at apurinic or apyrimidinic sites to products with a 5'-phosphate.. Its function is as follows. DNA repair enzyme involved in the repair of deaminated bases. Selectively cleaves double-stranded DNA at the second phosphodiester bond 3' to a deoxyinosine leaving behind the intact lesion on the nicked DNA. The chain is Endonuclease V from Desulfurococcus amylolyticus (strain DSM 18924 / JCM 16383 / VKM B-2413 / 1221n) (Desulfurococcus kamchatkensis).